A 448-amino-acid polypeptide reads, in one-letter code: Trigger factor (448 aa).

One can recognise a PPIase FKBP-type domain in the interval 162–243; that stretch reads GDFVQIDLNA…VRTVKEKELP (82 aa).

This sequence belongs to the FKBP-type PPIase family. Tig subfamily.

The protein resides in the cytoplasm. It catalyses the reaction [protein]-peptidylproline (omega=180) = [protein]-peptidylproline (omega=0). Its function is as follows. Involved in protein export. Acts as a chaperone by maintaining the newly synthesized protein in an open conformation. Functions as a peptidyl-prolyl cis-trans isomerase. This is Trigger factor from Salinispora arenicola (strain CNS-205).